A 252-amino-acid chain; its full sequence is Small ribosomal subunit protein uS3 (252 aa).

The region spanning isoleucine 39–lysine 111 is the KH type-2 domain. Residues lysine 222–asparagine 252 are disordered. Residues glycine 241 to asparagine 252 show a composition bias toward polar residues.

Belongs to the universal ribosomal protein uS3 family. Part of the 30S ribosomal subunit. Forms a tight complex with proteins S10 and S14.

In terms of biological role, binds the lower part of the 30S subunit head. Binds mRNA in the 70S ribosome, positioning it for translation. In Phytoplasma sp. (strain STRAWB2), this protein is Small ribosomal subunit protein uS3.